The primary structure comprises 362 residues: Putative RING-H2 finger protein ATL21B (362 aa).

An N-terminal signal peptide occupies residues Met-1–Ala-23. The helical transmembrane segment at Val-234–Ile-254 threads the bilayer. Residues Cys-316–Arg-358 form an RING-type; atypical zinc finger.

Belongs to the RING-type zinc finger family. ATL subfamily.

The protein localises to the membrane. It carries out the reaction S-ubiquitinyl-[E2 ubiquitin-conjugating enzyme]-L-cysteine + [acceptor protein]-L-lysine = [E2 ubiquitin-conjugating enzyme]-L-cysteine + N(6)-ubiquitinyl-[acceptor protein]-L-lysine.. The protein operates within protein modification; protein ubiquitination. This chain is Putative RING-H2 finger protein ATL21B (ATL21B), found in Arabidopsis thaliana (Mouse-ear cress).